We begin with the raw amino-acid sequence, 118 residues long: Small ribosomal subunit protein eS24 (118 aa).

The protein belongs to the eukaryotic ribosomal protein eS24 family.

This chain is Small ribosomal subunit protein eS24, found in Sulfolobus acidocaldarius (strain ATCC 33909 / DSM 639 / JCM 8929 / NBRC 15157 / NCIMB 11770).